A 164-amino-acid polypeptide reads, in one-letter code: Monothiol glutaredoxin-S10 (164 aa).

One can recognise a Glutaredoxin domain in the interval 60-161 (EDSVKRTLAD…TMLSELDIDV (102 aa)). A [2Fe-2S] cluster-binding site is contributed by cysteine 80.

Belongs to the glutaredoxin family. CPYC subfamily.

The protein localises to the cytoplasm. Functionally, may only reduce GSH-thiol disulfides, but not protein disulfides. The polypeptide is Monothiol glutaredoxin-S10 (GRXS10) (Oryza sativa subsp. japonica (Rice)).